The primary structure comprises 271 residues: 4-hydroxy-tetrahydrodipicolinate reductase (271 aa).

NAD(+) contacts are provided by residues 10–15 (GAGGRM), E36, 100–102 (GTT), and 124–127 (SGNM). Catalysis depends on H157, which acts as the Proton donor/acceptor. H158 contributes to the (S)-2,3,4,5-tetrahydrodipicolinate binding site. K161 serves as the catalytic Proton donor. Position 167-168 (167-168 (GT)) interacts with (S)-2,3,4,5-tetrahydrodipicolinate.

Belongs to the DapB family.

It is found in the cytoplasm. The enzyme catalyses (S)-2,3,4,5-tetrahydrodipicolinate + NAD(+) + H2O = (2S,4S)-4-hydroxy-2,3,4,5-tetrahydrodipicolinate + NADH + H(+). It catalyses the reaction (S)-2,3,4,5-tetrahydrodipicolinate + NADP(+) + H2O = (2S,4S)-4-hydroxy-2,3,4,5-tetrahydrodipicolinate + NADPH + H(+). It participates in amino-acid biosynthesis; L-lysine biosynthesis via DAP pathway; (S)-tetrahydrodipicolinate from L-aspartate: step 4/4. In terms of biological role, catalyzes the conversion of 4-hydroxy-tetrahydrodipicolinate (HTPA) to tetrahydrodipicolinate. This Rhodopseudomonas palustris (strain BisB18) protein is 4-hydroxy-tetrahydrodipicolinate reductase.